The primary structure comprises 122 residues: Small ribosomal subunit protein uS13 (122 aa).

Residues 94-122 (GLPVRGQVTQKNARTRKGPRKTVAGKKGK) form a disordered region. Basic residues predominate over residues 106 to 122 (ARTRKGPRKTVAGKKGK).

It belongs to the universal ribosomal protein uS13 family. Part of the 30S ribosomal subunit. Forms a loose heterodimer with protein S19. Forms two bridges to the 50S subunit in the 70S ribosome.

Its function is as follows. Located at the top of the head of the 30S subunit, it contacts several helices of the 16S rRNA. In the 70S ribosome it contacts the 23S rRNA (bridge B1a) and protein L5 of the 50S subunit (bridge B1b), connecting the 2 subunits; these bridges are implicated in subunit movement. Contacts the tRNAs in the A and P-sites. This Mycoplasma mobile (strain ATCC 43663 / 163K / NCTC 11711) (Mesomycoplasma mobile) protein is Small ribosomal subunit protein uS13.